The chain runs to 129 residues: UPF0344 protein SAR0931 (129 aa).

The next 4 membrane-spanning stretches (helical) occupy residues 1–21, 36–56, 67–87, and 99–119; these read MLHL…ATYL, LHMV…WILI, MLLT…EVSI, and MFWI…ILPL.

Belongs to the UPF0344 family.

Its subcellular location is the cell membrane. The protein is UPF0344 protein SAR0931 of Staphylococcus aureus (strain MRSA252).